The sequence spans 479 residues: Probable xyloglucan galactosyltransferase GT15 (479 aa).

The Cytoplasmic portion of the chain corresponds to 1 to 20 (MKNNNSSSVSIENHPWKKKP). Residues 21–40 (TTLLLFLSLLSISLLLLRLS) form a helical; Signal-anchor for type II membrane protein membrane-spanning segment. The Lumenal portion of the chain corresponds to 41–479 (QDKIILITTT…GIRRNEFKTD (439 aa)). N-linked (GlcNAc...) asparagine glycans are attached at residues Asn155, Asn242, Asn285, and Asn391.

Belongs to the glycosyltransferase 47 family. In terms of tissue distribution, expressed in roots, hypocotyls, cotyledons, leaves, stems and sepals.

The protein localises to the golgi apparatus membrane. Functions in xyloglucan synthesis by adding side chains to the xylosylated glucan backbone. Involved in the galactosylation of hemicellulose xyloglucan. In Arabidopsis thaliana (Mouse-ear cress), this protein is Probable xyloglucan galactosyltransferase GT15.